A 222-amino-acid chain; its full sequence is 3-dehydroquinate dehydratase (222 aa).

3-dehydroquinate-binding positions include 29-31 (ELR) and R55. The active-site Proton donor/acceptor is the H112. K139 serves as the catalytic Schiff-base intermediate with substrate. 3-dehydroquinate is bound by residues R178, S199, and Q203.

The protein belongs to the type-I 3-dehydroquinase family. Homodimer.

It catalyses the reaction 3-dehydroquinate = 3-dehydroshikimate + H2O. Its pathway is metabolic intermediate biosynthesis; chorismate biosynthesis; chorismate from D-erythrose 4-phosphate and phosphoenolpyruvate: step 3/7. Involved in the third step of the chorismate pathway, which leads to the biosynthesis of aromatic amino acids. Catalyzes the cis-dehydration of 3-dehydroquinate (DHQ) and introduces the first double bond of the aromatic ring to yield 3-dehydroshikimate. The chain is 3-dehydroquinate dehydratase from Dehalococcoides mccartyi (strain ATCC BAA-2100 / JCM 16839 / KCTC 5957 / BAV1).